A 496-amino-acid chain; its full sequence is Acyltransferase clz6 (496 aa).

H163 functions as the Proton acceptor in the catalytic mechanism.

This sequence belongs to the plant acyltransferase family. As to quaternary structure, monomer.

Its pathway is secondary metabolite biosynthesis. Functionally, acyltransferase; part of the gene cluster that mediates the biosynthesis of squalestatin S1 (SQS1, also known as zaragozic acid A), a heavily oxidized fungal polyketide that offers potent cholesterol lowering activity by targeting squalene synthase (SS). SQS1 is composed of a 2,8-dioxobicyclic[3.2.1]octane-3,4,5-tricarboxyclic acid core that is connected to two lipophilic polyketide arms. These initial steps feature the priming of an unusual benzoic acid starter unit onto the highly reducing polyketide synthase clz14, followed by oxaloacetate extension and product release to generate a tricarboxylic acid containing product. The phenylalanine ammonia lyase (PAL) clz10 and the acyl-CoA ligase clz12 are involved in transforming phenylalanine into benzoyl-CoA. The citrate synthase-like protein clz17 is involved in connecting the C-alpha-carbons of the hexaketide chain and oxaloacetate to afford the tricarboxylic acid unit. The potential hydrolytic enzymes, clz11 and clz13, are in close proximity to pks2 and may participate in product release. On the other side, the tetraketide arm is synthesized by a the squalestatin tetraketide synthase clz2 and enzymatically esterified to the core in the last biosynthetic step, by the acetyltransferase clz6. The biosynthesis of the tetraketide must involve 3 rounds of chain extension. After the first and second rounds methyl-transfer occurs, and in all rounds of extension the ketoreductase and dehydratase are active. The enoyl reductase and C-MeT of clz2 are not active in the final round of extension. The acetyltransferase clz6 appears to have a broad substrate selectivity for its acyl CoA substrate, allowing the in vitro synthesis of novel squalestatins. The biosynthesis of SQS1 requires several oxidative steps likely performed by oxidoreductases clz3, clz15 and clz16. Finally, in support of the identification of the cluster as being responsible for SQS1 production, the cluster contains a gene encoding a putative squalene synthase (SS) clz20, suggesting a likely mechanism for self-resistance. This is Acyltransferase clz6 from Cochliobolus lunatus (Filamentous fungus).